Reading from the N-terminus, the 381-residue chain is 4-hydroxyphenylpyruvate dioxygenase (381 aa).

VOC domains are found at residues Gly22–Arg156 and Ala184–Lys338. Fe cation is bound by residues His187, His270, and Glu349.

It belongs to the 4HPPD family. As to quaternary structure, homodimer. The cofactor is Fe cation.

The enzyme catalyses 3-(4-hydroxyphenyl)pyruvate + O2 = homogentisate + CO2. It participates in amino-acid degradation; L-phenylalanine degradation; acetoacetate and fumarate from L-phenylalanine: step 3/6. This chain is 4-hydroxyphenylpyruvate dioxygenase (hpd), found in Streptomyces avermitilis (strain ATCC 31267 / DSM 46492 / JCM 5070 / NBRC 14893 / NCIMB 12804 / NRRL 8165 / MA-4680).